The primary structure comprises 346 residues: 4-hydroxy-3-methylbut-2-enyl diphosphate reductase (346 aa).

Cys-19 provides a ligand contact to [4Fe-4S] cluster. (2E)-4-hydroxy-3-methylbut-2-enyl diphosphate contacts are provided by His-48 and His-84. Dimethylallyl diphosphate contacts are provided by His-48 and His-84. His-48 and His-84 together coordinate isopentenyl diphosphate. [4Fe-4S] cluster is bound at residue Cys-106. His-134 is a (2E)-4-hydroxy-3-methylbut-2-enyl diphosphate binding site. His-134 lines the dimethylallyl diphosphate pocket. His-134 contributes to the isopentenyl diphosphate binding site. Catalysis depends on Glu-136, which acts as the Proton donor. Thr-175 serves as a coordination point for (2E)-4-hydroxy-3-methylbut-2-enyl diphosphate. Cys-205 provides a ligand contact to [4Fe-4S] cluster. (2E)-4-hydroxy-3-methylbut-2-enyl diphosphate is bound by residues Ser-233, Ser-234, Asn-235, and Ser-278. Dimethylallyl diphosphate is bound by residues Ser-233, Ser-234, Asn-235, and Ser-278. Ser-233, Ser-234, Asn-235, and Ser-278 together coordinate isopentenyl diphosphate.

The protein belongs to the IspH family. [4Fe-4S] cluster serves as cofactor.

The catalysed reaction is isopentenyl diphosphate + 2 oxidized [2Fe-2S]-[ferredoxin] + H2O = (2E)-4-hydroxy-3-methylbut-2-enyl diphosphate + 2 reduced [2Fe-2S]-[ferredoxin] + 2 H(+). The enzyme catalyses dimethylallyl diphosphate + 2 oxidized [2Fe-2S]-[ferredoxin] + H2O = (2E)-4-hydroxy-3-methylbut-2-enyl diphosphate + 2 reduced [2Fe-2S]-[ferredoxin] + 2 H(+). It functions in the pathway isoprenoid biosynthesis; dimethylallyl diphosphate biosynthesis; dimethylallyl diphosphate from (2E)-4-hydroxy-3-methylbutenyl diphosphate: step 1/1. Its pathway is isoprenoid biosynthesis; isopentenyl diphosphate biosynthesis via DXP pathway; isopentenyl diphosphate from 1-deoxy-D-xylulose 5-phosphate: step 6/6. Its function is as follows. Catalyzes the conversion of 1-hydroxy-2-methyl-2-(E)-butenyl 4-diphosphate (HMBPP) into a mixture of isopentenyl diphosphate (IPP) and dimethylallyl diphosphate (DMAPP). Acts in the terminal step of the DOXP/MEP pathway for isoprenoid precursor biosynthesis. The protein is 4-hydroxy-3-methylbut-2-enyl diphosphate reductase of Brucella suis biovar 1 (strain 1330).